The sequence spans 399 residues: Serpin-Z4 (399 aa).

The segment at 36-56 is signal for targeting protein Z4 into the ER lumen; it reads GNVAFSPLSLHVALSLITAGA. Residues 343-367 are RCL; that stretch reads GTEAGAATVAMGVAMSMPLKVDLVD.

It belongs to the serpin family. In terms of tissue distribution, highly expressed in embryo and endosperm. Is accumulated and stored in the endosperm, where it exists in a free and a bound form. Expressed in roots, coleoptiles, shoots and leaves.

A major component of the endosperm albumin, this protein acts as a storage protein during grain filling, contributing a substantial part of the grain's lysine. May have an inhibitory function during filling or germination. Inhibits cathepsin G in vitro. The sequence is that of Serpin-Z4 (PAZ1) from Hordeum vulgare (Barley).